The sequence spans 435 residues: Elongation factor 1-alpha (435 aa).

The region spanning 6–231 is the tr-type G domain; sequence KVHINLVVIG…DALEPPKRPV (226 aa). The tract at residues 15 to 22 is G1; the sequence is GHVDSGKS. GTP is bound at residue 15–22; the sequence is GHVDSGKS. The segment at 71-75 is G2; it reads GITID. A G3 region spans residues 92-95; the sequence is DAPG. GTP is bound by residues 92-96 and 154-157; these read DAPGH and NKMD. A G4 region spans residues 154-157; sequence NKMD. The segment at 195 to 197 is G5; that stretch reads SGF.

It belongs to the TRAFAC class translation factor GTPase superfamily. Classic translation factor GTPase family. EF-Tu/EF-1A subfamily.

It localises to the cytoplasm. In terms of biological role, this protein promotes the GTP-dependent binding of aminoacyl-tRNA to the A-site of ribosomes during protein biosynthesis. In Tetrahymena pyriformis, this protein is Elongation factor 1-alpha.